We begin with the raw amino-acid sequence, 341 residues long: MTSELEALRQETEQLKNQIREARKAAADTTLAMATANVEPVGRIQMRTRRTLRGHLAKIYAMHWASDSRNLVSASQDGKLIVWDGYTTNKVHAIPLRSSWVMTCAYAPSGNYVACGGLDNICSIYSLKTREGNVRVSRELPGHTGYLSCCRFIDDNQIVTSSGDMTCALWNIETGNQITSFGGHTGDVMSLSLAPDMRTFVSGACDASAKLFDIRDGICKQTFTGHESDINAITYFPNGFAFATGSDDATCRLFDIRADQEIGMYSHDNIICGITSVAFSKSGRLLLGGYDDFNCNVWDVLKQERAGVLAGHDNRVSCLGVTEDGMAVATGSWDSFLKIWN.

WD repeat units follow at residues 54 to 84 (GHLA…IVWD), 96 to 126 (LRSS…SIYS), 142 to 171 (GHTG…ALWN), 183 to 213 (GHTG…KLFD), 225 to 255 (GHES…RLFD), 269 to 299 (NIIC…NVWD), and 311 to 341 (GHDN…KIWN).

It belongs to the WD repeat G protein beta family. In terms of assembly, g proteins are composed of 3 units, alpha, beta and gamma.

Guanine nucleotide-binding proteins (G proteins) are involved as a modulator or transducer in various transmembrane signaling systems. The beta and gamma chains are required for the GTPase activity, for replacement of GDP by GTP, and for G protein-effector interaction. The polypeptide is Guanine nucleotide-binding protein subunit beta (Loligo forbesii (Veined squid)).